We begin with the raw amino-acid sequence, 427 residues long: Glutamate-1-semialdehyde 2,1-aminomutase (427 aa).

K267 bears the N6-(pyridoxal phosphate)lysine mark.

The protein belongs to the class-III pyridoxal-phosphate-dependent aminotransferase family. HemL subfamily. In terms of assembly, homodimer. Pyridoxal 5'-phosphate serves as cofactor.

The protein resides in the cytoplasm. It catalyses the reaction (S)-4-amino-5-oxopentanoate = 5-aminolevulinate. It functions in the pathway porphyrin-containing compound metabolism; protoporphyrin-IX biosynthesis; 5-aminolevulinate from L-glutamyl-tRNA(Glu): step 2/2. The chain is Glutamate-1-semialdehyde 2,1-aminomutase from Acetivibrio thermocellus (strain ATCC 27405 / DSM 1237 / JCM 9322 / NBRC 103400 / NCIMB 10682 / NRRL B-4536 / VPI 7372) (Clostridium thermocellum).